The following is a 315-amino-acid chain: Ribosomal RNA small subunit methyltransferase H (315 aa).

S-adenosyl-L-methionine-binding positions include 33 to 35, Asp-52, Phe-84, Asp-106, and Gln-113; that span reads GGH.

Belongs to the methyltransferase superfamily. RsmH family.

It localises to the cytoplasm. It catalyses the reaction cytidine(1402) in 16S rRNA + S-adenosyl-L-methionine = N(4)-methylcytidine(1402) in 16S rRNA + S-adenosyl-L-homocysteine + H(+). Specifically methylates the N4 position of cytidine in position 1402 (C1402) of 16S rRNA. In Lactobacillus acidophilus (strain ATCC 700396 / NCK56 / N2 / NCFM), this protein is Ribosomal RNA small subunit methyltransferase H.